Reading from the N-terminus, the 192-residue chain is Erythropoietin (192 aa).

The signal sequence occupies residues Met1–Cys26. Cys33 and Cys187 form a disulfide bridge. N-linked (GlcNAc...) asparagine glycans are attached at residues Asn50, Asn64, and Asn109.

This sequence belongs to the EPO/TPO family. Produced by kidney or liver of adult mammals and by liver of fetal or neonatal mammals.

It is found in the secreted. Hormone involved in the regulation of erythrocyte proliferation and differentiation and the maintenance of a physiological level of circulating erythrocyte mass. Binds to EPOR leading to EPOR dimerization and JAK2 activation thereby activating specific downstream effectors, including STAT1 and STAT3. The chain is Erythropoietin (Epo) from Mus musculus (Mouse).